The following is a 260-amino-acid chain: 3-alpha-(or 20-beta)-hydroxysteroid dehydrogenase (260 aa).

NAD(+) contacts are provided by arginine 17, methionine 19, aspartate 38, aspartate 61, valine 62, asparagine 88, tyrosine 153, lysine 157, valine 186, threonine 188, and threonine 191. Tyrosine 153 (proton acceptor) is an active-site residue.

It belongs to the short-chain dehydrogenases/reductases (SDR) family. In terms of assembly, homotetramer.

The catalysed reaction is androstan-3alpha,17beta-diol + NAD(+) = 17beta-hydroxyandrostanone + NADH + H(+). The protein operates within lipid metabolism; steroid degradation. Its function is as follows. Probably involved in steroid metabolism. The polypeptide is 3-alpha-(or 20-beta)-hydroxysteroid dehydrogenase (fabG3) (Mycobacterium tuberculosis (strain CDC 1551 / Oshkosh)).